The sequence spans 484 residues: MHEKTIAELSAALTKGECSSVELTEHFLKRIEALDGGLNSFVTVTAEQALAQAKAADDRRARGEAGPLTGVPMAQKDIFCTDGVRTTCGSKMLDNFIAPYDATVVERFKAEGCPMLGKTNMDEFAMGSSNETSFHGPVKNPWDTARVPGGSSGGSAAAVAARLTPSATGTDTGGSIRQPAALCGITGLKPTYGRVSRWGMIAFASSLDQGGPMAATAEDCALLANVMSGFDPRDSTSIERPAEDFTARLNEPLKGLRIGLPREFFGEGLDAGVAKAVDEAIEQYKQLGAEVKEVGLPNSGLSVPAYYVVAPAECSSNLARFDGVRYGYRCENPKDLMDLYTRSRGEGFGAEVKRRIMVGTYALSAGYFDAYYLKAQKIRRLIADDFARAFEEVDVILGPTSPSTAFRLGEKTDDPVTMYLSDIYTIAVNLAGLPGMSIPAGFSDGLPVGLQLIGNYFDEARLLGVAHQYQSVTDWHRRIPKGFE.

Catalysis depends on charge relay system residues lysine 76 and serine 151. Serine 175 serves as the catalytic Acyl-ester intermediate.

Belongs to the amidase family. GatA subfamily. In terms of assembly, heterotrimer of A, B and C subunits.

The catalysed reaction is L-glutamyl-tRNA(Gln) + L-glutamine + ATP + H2O = L-glutaminyl-tRNA(Gln) + L-glutamate + ADP + phosphate + H(+). Functionally, allows the formation of correctly charged Gln-tRNA(Gln) through the transamidation of misacylated Glu-tRNA(Gln) in organisms which lack glutaminyl-tRNA synthetase. The reaction takes place in the presence of glutamine and ATP through an activated gamma-phospho-Glu-tRNA(Gln). The polypeptide is Glutamyl-tRNA(Gln) amidotransferase subunit A (Thioalkalivibrio sulfidiphilus (strain HL-EbGR7)).